The following is a 440-amino-acid chain: 23S rRNA (uracil(1939)-C(5))-methyltransferase RlmD (440 aa).

In terms of domain architecture, TRAM spans 11-69; the sequence is STLDTKHQPVTIERLDHQGSGLAFLHKKPLFVDGALPGEEVLIQLTENKSKYARGQLIK. Residues C82, C88, C91, and C169 each contribute to the [4Fe-4S] cluster site. 6 residues coordinate S-adenosyl-L-methionine: Q272, F301, N306, E322, N349, and D370. C396 functions as the Nucleophile in the catalytic mechanism.

This sequence belongs to the class I-like SAM-binding methyltransferase superfamily. RNA M5U methyltransferase family. RlmD subfamily.

The enzyme catalyses uridine(1939) in 23S rRNA + S-adenosyl-L-methionine = 5-methyluridine(1939) in 23S rRNA + S-adenosyl-L-homocysteine + H(+). Its function is as follows. Catalyzes the formation of 5-methyl-uridine at position 1939 (m5U1939) in 23S rRNA. The sequence is that of 23S rRNA (uracil(1939)-C(5))-methyltransferase RlmD from Vibrio cholerae serotype O1 (strain ATCC 39541 / Classical Ogawa 395 / O395).